We begin with the raw amino-acid sequence, 111 residues long: WAP four-disulfide core domain protein 12 (111 aa).

A signal peptide spans 1–23 (MGSSSFLVLMVSLALVTLVVVEG). A WAP domain is found at 27-74 (GIEKAGVCPADNVRCFKSNPPQCHTDQDCLGERKCCYLHCGFKCVIPV). 4 disulfides stabilise this stretch: Cys-34-Cys-62, Cys-41-Cys-66, Cys-49-Cys-61, and Cys-55-Cys-70. Residues 80–111 (GGNKDEDVSGPHPEPGWEAKSPGSSSTGCPQI) are disordered. Residues 101–111 (PGSSSTGCPQI) show a composition bias toward polar residues.

The protein localises to the secreted. Antibacterial protein. Putative acid-stable proteinase inhibitor. This is WAP four-disulfide core domain protein 12 (WFDC12) from Colobus guereza (Mantled guereza).